Consider the following 97-residue polypeptide: Aspartyl/glutamyl-tRNA(Asn/Gln) amidotransferase subunit C (97 aa).

It belongs to the GatC family. Heterotrimer of A, B and C subunits.

The catalysed reaction is L-glutamyl-tRNA(Gln) + L-glutamine + ATP + H2O = L-glutaminyl-tRNA(Gln) + L-glutamate + ADP + phosphate + H(+). It carries out the reaction L-aspartyl-tRNA(Asn) + L-glutamine + ATP + H2O = L-asparaginyl-tRNA(Asn) + L-glutamate + ADP + phosphate + 2 H(+). Its function is as follows. Allows the formation of correctly charged Asn-tRNA(Asn) or Gln-tRNA(Gln) through the transamidation of misacylated Asp-tRNA(Asn) or Glu-tRNA(Gln) in organisms which lack either or both of asparaginyl-tRNA or glutaminyl-tRNA synthetases. The reaction takes place in the presence of glutamine and ATP through an activated phospho-Asp-tRNA(Asn) or phospho-Glu-tRNA(Gln). This chain is Aspartyl/glutamyl-tRNA(Asn/Gln) amidotransferase subunit C, found in Listeria monocytogenes serotype 4b (strain CLIP80459).